A 726-amino-acid chain; its full sequence is Catalase-peroxidase (726 aa).

The segment at residues Trp91–Tyr214 is a cross-link (tryptophyl-tyrosyl-methioninium (Trp-Tyr) (with M-240)). Catalysis depends on His92, which acts as the Proton acceptor. The segment at residues Tyr214–Met240 is a cross-link (tryptophyl-tyrosyl-methioninium (Tyr-Met) (with W-91)). A heme b-binding site is contributed by His255. Residues Ala335–Ser362 form a disordered region.

It belongs to the peroxidase family. Peroxidase/catalase subfamily. As to quaternary structure, homodimer or homotetramer. It depends on heme b as a cofactor. In terms of processing, formation of the three residue Trp-Tyr-Met cross-link is important for the catalase, but not the peroxidase activity of the enzyme.

The catalysed reaction is H2O2 + AH2 = A + 2 H2O. The enzyme catalyses 2 H2O2 = O2 + 2 H2O. Functionally, bifunctional enzyme with both catalase and broad-spectrum peroxidase activity. This chain is Catalase-peroxidase, found in Cupriavidus metallidurans (strain ATCC 43123 / DSM 2839 / NBRC 102507 / CH34) (Ralstonia metallidurans).